Consider the following 714-residue polypeptide: ATP-dependent DNA helicase DinG (714 aa).

The 278-residue stretch at 17–294 folds into the Helicase ATP-binding domain; the sequence is ALQDQIPDFI…TCMEQFRPKT (278 aa). An ATP-binding site is contributed by 54–61; sequence APTGVGKT. 4 residues coordinate [4Fe-4S] cluster: Cys-120, Cys-194, Cys-199, and Cys-205. The short motif at 248 to 251 is the DEAH box element; that stretch reads DEGH. A Helicase C-terminal domain is found at 517–698; it reads HIAEMAAYFR…VFPIEQPAVP (182 aa).

It belongs to the helicase family. DinG subfamily. Type 1 sub-subfamily. [4Fe-4S] cluster serves as cofactor.

It carries out the reaction Couples ATP hydrolysis with the unwinding of duplex DNA at the replication fork by translocating in the 5'-3' direction. This creates two antiparallel DNA single strands (ssDNA). The leading ssDNA polymer is the template for DNA polymerase III holoenzyme which synthesizes a continuous strand.. The catalysed reaction is ATP + H2O = ADP + phosphate + H(+). DNA-dependent ATPase and 5'-3' DNA helicase. Unwinds D-loops, R-loops, forked DNA and G-quadruplex DNA. The protein is ATP-dependent DNA helicase DinG of Salmonella paratyphi A (strain ATCC 9150 / SARB42).